We begin with the raw amino-acid sequence, 339 residues long: NADH-quinone oxidoreductase subunit H (339 aa).

The next 9 helical transmembrane spans lie at 9-29 (IFPLIIIALKVVAITTPLILC), 50-70 (PNVVGPFGLLQPIADAVKLLF), 82-102 (ILFILAPMITFILSLIGWAVI), 115-135 (VGVLYILAISSLSVYGIIIAG), 161-181 (MGLVIITVLLTTGTLNLSEII), 187-207 (MPWWIDLMLLPMGVVFFISVL), 235-255 (MGFALFFLGEYANMILVSAMT), 275-295 (IPGFFWFVFKVGFLLFCFLWI), and 311-331 (GWKVFLPLTLFWVVLVSSVLV).

Belongs to the complex I subunit 1 family. As to quaternary structure, NDH-1 is composed of 14 different subunits. Subunits NuoA, H, J, K, L, M, N constitute the membrane sector of the complex.

The protein resides in the cell inner membrane. The catalysed reaction is a quinone + NADH + 5 H(+)(in) = a quinol + NAD(+) + 4 H(+)(out). In terms of biological role, NDH-1 shuttles electrons from NADH, via FMN and iron-sulfur (Fe-S) centers, to quinones in the respiratory chain. The immediate electron acceptor for the enzyme in this species is believed to be ubiquinone. Couples the redox reaction to proton translocation (for every two electrons transferred, four hydrogen ions are translocated across the cytoplasmic membrane), and thus conserves the redox energy in a proton gradient. This subunit may bind ubiquinone. This is NADH-quinone oxidoreductase subunit H from Rickettsia peacockii (strain Rustic).